A 102-amino-acid chain; its full sequence is Small ribosomal subunit protein uS10 (102 aa).

It belongs to the universal ribosomal protein uS10 family. As to quaternary structure, part of the 30S ribosomal subunit.

Functionally, involved in the binding of tRNA to the ribosomes. This chain is Small ribosomal subunit protein uS10, found in Nitrosospira multiformis (strain ATCC 25196 / NCIMB 11849 / C 71).